We begin with the raw amino-acid sequence, 483 residues long: Triplex capsid protein 1 (483 aa).

The RIP homotypic interaction motif (RHIM) motif lies at 24 to 40 (LLGNNRFIQIGNGLHMT).

This sequence belongs to the herpesviridae TRX1 protein family. In terms of assembly, interacts with TRX2, MCP and capsid vertex component 2/CVC2. Self-assembles into homo-oligomeric amyloid fibrils. Interacts with host ZBP1; this interaction prevents host necroptosis and extrinsic apoptosis. Interacts with host RIPK3.

It localises to the virion. It is found in the host nucleus. Functionally, structural component of the T=16 icosahedral capsid. The capsid is composed of pentamers and hexamers of major capsid protein/MCP, which are linked together by heterotrimers called triplexes. These triplexes are formed by a single molecule of triplex protein 1/TRX1 and two copies of triplex protein 2/TRX2. Additionally, TRX1 is required for efficient transport of TRX2 to the nucleus, which is the site of capsid assembly. Also prevents necroptosis and extrinsic apoptosis by sequestering host ZBP1 into large, insoluble supercomplexes and impairing its ability to interact with RIPK3. This chain is Triplex capsid protein 1, found in Varicella-zoster virus (strain Dumas) (HHV-3).